The chain runs to 92 residues: Small ribosomal subunit protein uS19 (92 aa).

It belongs to the universal ribosomal protein uS19 family.

Its function is as follows. Protein S19 forms a complex with S13 that binds strongly to the 16S ribosomal RNA. The chain is Small ribosomal subunit protein uS19 from Buchnera aphidicola subsp. Baizongia pistaciae (strain Bp).